The primary structure comprises 539 residues: Acid-sensing ion channel 4-A (539 aa).

The Cytoplasmic segment spans residues methionine 1–leucine 68. A helical transmembrane segment spans residues tryptophan 69 to isoleucine 89. Topologically, residues serine 90–glycine 432 are extracellular. Intrachain disulfides connect cysteine 116–cysteine 200 and cysteine 178–cysteine 185. N-linked (GlcNAc...) asparagine glycosylation is found at asparagine 136, asparagine 165, asparagine 179, asparagine 184, asparagine 206, and asparagine 241. Cystine bridges form between cysteine 294–cysteine 369, cysteine 313–cysteine 365, cysteine 317–cysteine 363, cysteine 326–cysteine 347, and cysteine 328–cysteine 340. Asparagine 370 is a glycosylation site (N-linked (GlcNAc...) asparagine). Residues leucine 433–leucine 453 form a helical membrane-spanning segment. The GAS motif; ion selectivity filter signature appears at glycine 446–serine 448. Over glutamate 454 to cysteine 539 the chain is Cytoplasmic. Residues glutamine 474 to asparagine 494 are disordered.

This sequence belongs to the amiloride-sensitive sodium channel (TC 1.A.6) family. ASIC4 subfamily. In terms of assembly, homotrimer. Heterotrimer; with other ASIC proteins producing functional channels. As to expression, expressed in central nervous system.

Its subcellular location is the cell membrane. The enzyme catalyses Na(+)(in) = Na(+)(out). Inhibited by the diuretic drug amiloride. Its function is as follows. Could form pH-gated trimeric sodium channels and function as a postsynaptic excitatory receptors in the nervous system. This is Acid-sensing ion channel 4-A from Danio rerio (Zebrafish).